Consider the following 594-residue polypeptide: UvrABC system protein C (594 aa).

In terms of domain architecture, GIY-YIG spans 14 to 91 (DQPGCYLMKD…IKKYDPKYNI (78 aa)). The UVR domain occupies 196-231 (KEIRSELETKMYEASEKLEFERAKELRDQIAHIDAI).

The protein belongs to the UvrC family. As to quaternary structure, interacts with UvrB in an incision complex.

The protein localises to the cytoplasm. Functionally, the UvrABC repair system catalyzes the recognition and processing of DNA lesions. UvrC both incises the 5' and 3' sides of the lesion. The N-terminal half is responsible for the 3' incision and the C-terminal half is responsible for the 5' incision. The protein is UvrABC system protein C of Bacillus mycoides (strain KBAB4) (Bacillus weihenstephanensis).